Here is a 473-residue protein sequence, read N- to C-terminus: Photosystem II CP43 reaction center protein (473 aa).

The propeptide occupies 1-14 (MKTLYSLRRFYHVE). At threonine 15 the chain carries N-acetylthreonine. Threonine 15 is modified (phosphothreonine). 5 helical membrane-spanning segments follow: residues 69–93 (LFEV…PHLA), 134–155 (LLGP…KDRN), 178–200 (KASY…RKIT), 255–275 (KPFA…LSYS), and 291–312 (WFNN…ASQA). Glutamate 367 contributes to the [CaMn4O5] cluster binding site. The helical transmembrane segment at 447–471 (RARAAAAGFEKGIDRDFEPVLSMTP) threads the bilayer.

The protein belongs to the PsbB/PsbC family. PsbC subfamily. As to quaternary structure, PSII is composed of 1 copy each of membrane proteins PsbA, PsbB, PsbC, PsbD, PsbE, PsbF, PsbH, PsbI, PsbJ, PsbK, PsbL, PsbM, PsbT, PsbX, PsbY, PsbZ, Psb30/Ycf12, at least 3 peripheral proteins of the oxygen-evolving complex and a large number of cofactors. It forms dimeric complexes. It depends on Binds multiple chlorophylls and provides some of the ligands for the Ca-4Mn-5O cluster of the oxygen-evolving complex. It may also provide a ligand for a Cl- that is required for oxygen evolution. PSII binds additional chlorophylls, carotenoids and specific lipids. as a cofactor.

The protein resides in the plastid. The protein localises to the chloroplast thylakoid membrane. In terms of biological role, one of the components of the core complex of photosystem II (PSII). It binds chlorophyll and helps catalyze the primary light-induced photochemical processes of PSII. PSII is a light-driven water:plastoquinone oxidoreductase, using light energy to abstract electrons from H(2)O, generating O(2) and a proton gradient subsequently used for ATP formation. The protein is Photosystem II CP43 reaction center protein of Cicer arietinum (Chickpea).